A 356-amino-acid chain; its full sequence is NADH dehydrogenase (ubiquinone) complex I, assembly factor 6 homolog (356 aa).

The N-terminal 41 residues, 1–41 (MIRNSGRILFNSLKNSNVKLINRNVIINSNIRLFSTSTNNT), are a transit peptide targeting the mitochondrion.

Belongs to the NDUFAF6 family.

It is found in the mitochondrion inner membrane. Functionally, involved in the assembly of mitochondrial NADH:ubiquinone oxidoreductase complex (complex I) at early stages. The chain is NADH dehydrogenase (ubiquinone) complex I, assembly factor 6 homolog from Dictyostelium discoideum (Social amoeba).